Consider the following 525-residue polypeptide: Neutrophil cytosol factor 2 (525 aa).

TPR repeat units lie at residues 37–70 (SRIC…DKHS), 71–104 (AVAY…LRGN), and 121–154 (CEVL…KSEP). At Thr-233 the chain carries Phosphothreonine. Positions 240-299 (LEGEAHRVLFGFVPETPEELQVMPGNIVFVLKKGSDNWATVMFNGQKGLVPCNYLEPVEL) constitute an SH3 1 domain. Residues 304–343 (QSQPQEDTSPESDIPPPPNSSPPGRLQLSPGHKQKEPKEL) are disordered. Phosphoserine occurs at positions 324 and 398. The PB1 domain occupies 350–428 (PYMLKVHYKY…YCLTLWCEHT (79 aa)). Positions 437–457 (EPIQRENSDASKQTTEPQPKE) are disordered. The 60-residue stretch at 456–515 (KEGTQVVAIFSYEAAQPEDLEFVEGDVILVLSHVNEEWLEGECKGKVGIFPKAFVEGCAA) folds into the SH3 2 domain.

The protein belongs to the NCF2/NOXA1 family. As to quaternary structure, component of the phagocyte NADPH oxidase complex composed of an obligatory core heterodimer formed by the membrane proteins CYBA and CYBB and the cytosolic regulatory subunits NCF1/p47-phox, NCF2/p67-phox, NCF4/p40-phox and the small GTPase RAC1 or RAC2. Part of a cytosolic complex composed at least by NCF1, NCF2 and NCF4. Interacts with NCF4. Interacts (via the C-terminal SH3 domain) with NCF1 (via C-terminus). Interacts with SYTL1 and RAC1. May interact with NOXO1. Interacts with S100A8 and calprotectin (S100A8/9). Interacts with GBP7 (via GB1/RHD3-type G domain). Interacts with CYBB; the interaction is enhanced in the presence of GBP7.

The protein resides in the cytoplasm. In terms of biological role, NCF2, NCF1, and a membrane bound cytochrome b558 are required for activation of the latent NADPH oxidase (necessary for superoxide production). Functionally, subunit of the phagocyte NADPH oxidase complex that mediates the transfer of electrons from cytosolic NADPH to O2 to produce the superoxide anion (O2(-)). In the activated complex, electrons are first transferred from NADPH to flavin adenine dinucleotide (FAD) and subsequently transferred via two heme molecules to molecular oxygen, producing superoxide through an outer-sphere reaction. Activation of the NADPH oxidase complex is initiated by the assembly of cytosolic subunits of the NADPH oxidase complex with the core NADPH oxidase complex to form a complex at the plasma membrane or phagosomal membrane. This activation process is initiated by phosphorylation dependent binding of the cytosolic NCF1/p47-phox subunit to the C-terminus of CYBA/p22-phox. The sequence is that of Neutrophil cytosol factor 2 from Mus musculus (Mouse).